We begin with the raw amino-acid sequence, 511 residues long: 2,3-bisphosphoglycerate-independent phosphoglycerate mutase (511 aa).

Mn(2+) contacts are provided by D18 and S68. Catalysis depends on S68, which acts as the Phosphoserine intermediate. Substrate is bound by residues H129, 159 to 160 (RD), R191, K197, 261 to 264 (RSDR), and K329. Mn(2+) is bound by residues D396, H400, D437, H438, and H459. Residues 442–464 (ERMTKQAPDGSVRPYGGHTTNPV) are disordered.

The protein belongs to the BPG-independent phosphoglycerate mutase family. Monomer. The cofactor is Mn(2+).

It carries out the reaction (2R)-2-phosphoglycerate = (2R)-3-phosphoglycerate. The protein operates within carbohydrate degradation; glycolysis; pyruvate from D-glyceraldehyde 3-phosphate: step 3/5. In terms of biological role, catalyzes the interconversion of 2-phosphoglycerate and 3-phosphoglycerate. In Streptomyces coelicolor (strain ATCC BAA-471 / A3(2) / M145), this protein is 2,3-bisphosphoglycerate-independent phosphoglycerate mutase.